A 386-amino-acid polypeptide reads, in one-letter code: Delta(7)-sterol 5(6)-desaturase ERG3 (386 aa).

The next 3 helical transmembrane spans lie at Leu-120–Leu-140, Ile-172–Phe-192, and Ala-206–His-226. Residues Phe-214–Asn-337 form the Fatty acid hydroxylase domain. Residues His-226–His-230 carry the Histidine box-1 motif. Positions His-239 to His-243 match the Histidine box-2 motif. Residues Pro-272–Trp-292 traverse the membrane as a helical segment. Residues His-314 to His-318 carry the Histidine box-3 motif.

The protein belongs to the sterol desaturase family. Requires Fe cation as cofactor.

The protein localises to the endoplasmic reticulum membrane. The catalysed reaction is a Delta(7)-sterol + 2 Fe(II)-[cytochrome b5] + O2 + 2 H(+) = a Delta(5),Delta(7)-sterol + 2 Fe(III)-[cytochrome b5] + 2 H2O. The protein operates within steroid metabolism; ergosterol biosynthesis; ergosterol from zymosterol: step 3/5. Functionally, C-5 sterol desaturase; part of the third module of ergosterol biosynthesis pathway that includes the late steps of the pathwa. ERG3 catalyzes the introduction of a C-5 double bond in the B ring to produce 5-dehydroepisterol. The third module or late pathway involves the ergosterol synthesis itself through consecutive reactions that mainly occur in the endoplasmic reticulum (ER) membrane. Firstly, the squalene synthase ERG9 catalyzes the condensation of 2 farnesyl pyrophosphate moieties to form squalene, which is the precursor of all steroids. Squalene synthase is crucial for balancing the incorporation of farnesyl diphosphate (FPP) into sterol and nonsterol isoprene synthesis. Secondly, the squalene epoxidase ERG1 catalyzes the stereospecific oxidation of squalene to (S)-2,3-epoxysqualene, which is considered to be a rate-limiting enzyme in steroid biosynthesis. Then, the lanosterol synthase ERG7 catalyzes the cyclization of (S)-2,3 oxidosqualene to lanosterol, a reaction that forms the sterol core. In the next steps, lanosterol is transformed to zymosterol through a complex process involving various demethylation, reduction and desaturation reactions. The lanosterol 14-alpha-demethylase ERG11 (also known as CYP51) catalyzes C14-demethylation of lanosterol to produce 4,4'-dimethyl cholesta-8,14,24-triene-3-beta-ol, which is critical for ergosterol biosynthesis. The C-14 reductase ERG24 reduces the C14=C15 double bond of 4,4-dimethyl-cholesta-8,14,24-trienol to produce 4,4-dimethyl-cholesta-8,24-dienol. 4,4-dimethyl-cholesta-8,24-dienol is substrate of the C-4 demethylation complex ERG25-ERG26-ERG27 in which ERG25 catalyzes the three-step monooxygenation required for the demethylation of 4,4-dimethyl and 4alpha-methylsterols, ERG26 catalyzes the oxidative decarboxylation that results in a reduction of the 3-beta-hydroxy group at the C-3 carbon to an oxo group, and ERG27 is responsible for the reduction of the keto group on the C-3. ERG28 has a role as a scaffold to help anchor ERG25, ERG26 and ERG27 to the endoplasmic reticulum and ERG29 regulates the activity of the iron-containing C4-methylsterol oxidase ERG25. Then, the sterol 24-C-methyltransferase ERG6 catalyzes the methyl transfer from S-adenosyl-methionine to the C-24 of zymosterol to form fecosterol. The C-8 sterol isomerase ERG2 catalyzes the reaction which results in unsaturation at C-7 in the B ring of sterols and thus converts fecosterol to episterol. The sterol-C5-desaturase ERG3 then catalyzes the introduction of a C-5 double bond in the B ring to produce 5-dehydroepisterol. The C-22 sterol desaturase ERG5 further converts 5-dehydroepisterol into ergosta-5,7,22,24(28)-tetraen-3beta-ol by forming the C-22(23) double bond in the sterol side chain. Finally, ergosta-5,7,22,24(28)-tetraen-3beta-ol is substrate of the C-24(28) sterol reductase ERG4 to produce ergosterol. In Candida albicans (strain SC5314 / ATCC MYA-2876) (Yeast), this protein is Delta(7)-sterol 5(6)-desaturase ERG3.